Here is a 250-residue protein sequence, read N- to C-terminus: FAS1 domain-containing protein AER383W (250 aa).

An N-terminal signal peptide occupies residues 1 to 18 (MRLKTILLGFCAFHVARS). The region spanning 87–247 (GVTLDDRLQS…GIVLVIDSSL (161 aa)) is the FAS1 domain.

The protein resides in the vacuole. This Eremothecium gossypii (strain ATCC 10895 / CBS 109.51 / FGSC 9923 / NRRL Y-1056) (Yeast) protein is FAS1 domain-containing protein AER383W.